Reading from the N-terminus, the 377-residue chain is Alanine racemase (377 aa).

Lys-37 functions as the Proton acceptor; specific for D-alanine in the catalytic mechanism. Lys-37 is modified (N6-(pyridoxal phosphate)lysine). Arg-135 contributes to the substrate binding site. Tyr-271 acts as the Proton acceptor; specific for L-alanine in catalysis. Met-319 provides a ligand contact to substrate.

Belongs to the alanine racemase family. Requires pyridoxal 5'-phosphate as cofactor.

The catalysed reaction is L-alanine = D-alanine. The protein operates within amino-acid biosynthesis; D-alanine biosynthesis; D-alanine from L-alanine: step 1/1. Catalyzes the interconversion of L-alanine and D-alanine. May also act on other amino acids. The sequence is that of Alanine racemase (alr) from Helicobacter pylori (strain P12).